Here is a 312-residue protein sequence, read N- to C-terminus: Porphobilinogen deaminase (312 aa).

Residue C235 is modified to S-(dipyrrolylmethanemethyl)cysteine.

It belongs to the HMBS family. Monomer. Dipyrromethane serves as cofactor.

The catalysed reaction is 4 porphobilinogen + H2O = hydroxymethylbilane + 4 NH4(+). Its pathway is porphyrin-containing compound metabolism; protoporphyrin-IX biosynthesis; coproporphyrinogen-III from 5-aminolevulinate: step 2/4. Its function is as follows. Tetrapolymerization of the monopyrrole PBG into the hydroxymethylbilane pre-uroporphyrinogen in several discrete steps. This is Porphobilinogen deaminase from Mycolicibacterium gilvum (strain PYR-GCK) (Mycobacterium gilvum (strain PYR-GCK)).